Here is a 676-residue protein sequence, read N- to C-terminus: MKTVLLLICLLGSAFTTPTDPLNYQFGAHGQKTAEKHKYTHSEMPEEENTGFVNKGDVLSGHRTIKAEVPVLDTQKDEPWASRRQGQGDGEHQTKNSLRSINFLTLHSNPGLASDNQESNSGSSREQHSSEHHQPRRHRKHGNMAGQWALRGESPVDALGLVRERNTWKYNKNTVGLDENNNGSEEEEAGEEEDEEWGEETDYRDMKHRARGTSHGREYRRWQNENSRPSGEFLRDSSLPVRITKRHGEKFSMEEESQEKLYKEGKLPLSKKNHNEDQGEKRQSEESKEHFQVVNQRKHRAVTKRQDKEGSNAEEDDNDSGDDGEEDLGNVWREAVYEEEERMQSNDQDSITNKQKEEITAGDDSGVYREMQDYKGDKIKDVTHSEDNHYHHEPPNSSSKQQLQTSSSVESMNSTEHEDEVKTTGGSYHEESARNSTGKALPDLCRNFHCKRGKVCQADKQGKPSCICQDPAACPSTKDYKRVCGTDNKTYDGTCQLFGTKCQLEGTKMGRQLHLDYMGACKHIPHCTDYEVNQFPLRMRDWLKNILMQYYERDQDTSAFLTEKQRNKVKKIYLNEKRLVSGEHPVELLLHDFEKNYHMYLYPVHWQFYQLDQHPVDRSLTHSELAPLRASLVPMEHCITRFFQECDGDQDKLITLKEWCHCFAIKEEDINENLLF.

An N-terminal signal peptide occupies residues 1–16 (MKTVLLLICLLGSAFT). Basic and acidic residues predominate over residues 35–44 (EKHKYTHSEM). 3 disordered regions span residues 35 to 151 (EKHK…WALR), 173 to 369 (NTVG…GVYR), and 385 to 437 (SEDN…RNST). Residues 95 to 108 (KNSLRSINFLTLHS) are compositionally biased toward polar residues. A glycan (N-linked (GlcNAc...) asparagine) is linked at asparagine 182. Residues 184–202 (SEEEEAGEEEDEEWGEETD) are compositionally biased toward acidic residues. Basic and acidic residues-rich tracts occupy residues 249–266 (EKFSMEEESQEKLYKEGK) and 273–291 (NHNEDQGEKRQSEESKEHF). The segment covering 312–328 (NAEEDDNDSGDDGEEDL) has biased composition (acidic residues). Residue asparagine 318 is glycosylated (N-linked (GlcNAc...) asparagine). The segment covering 385-394 (SEDNHYHHEP) has biased composition (basic and acidic residues). A glycan (N-linked (GlcNAc...) asparagine) is linked at asparagine 396. The span at 397-408 (SSSKQQLQTSSS) shows a compositional bias: low complexity. An N-linked (GlcNAc...) asparagine glycan is attached at asparagine 413. Over residues 415–433 (TEHEDEVKTTGGSYHEESA) the composition is skewed to basic and acidic residues. The N-linked (GlcNAc...) asparagine glycan is linked to asparagine 435. The region spanning 444–466 (LCRNFHCKRGKVCQADKQGKPSC) is the Follistatin-like domain. Disulfide bonds link cysteine 445-cysteine 456, cysteine 450-cysteine 466, cysteine 468-cysteine 502, cysteine 474-cysteine 495, cysteine 484-cysteine 521, cysteine 527-cysteine 638, and cysteine 646-cysteine 662. The Kazal-like domain maps to 462–523 (GKPSCICQDP…HLDYMGACKH (62 aa)). Residue asparagine 488 is glycosylated (N-linked (GlcNAc...) asparagine). In terms of domain architecture, EF-hand spans 634 to 669 (PMEHCITRFFQECDGDQDKLITLKEWCHCFAIKEED). Ca(2+) contacts are provided by aspartate 647, aspartate 649, aspartate 651, and glutamate 658.

Belongs to the SPARC family. As to expression, glial (Mueller) cells of the neuroretina.

The protein localises to the secreted. It localises to the extracellular space. Its subcellular location is the extracellular matrix. Its function is as follows. Could play a role in the late stage of neuroretina morphogenesis. In Coturnix japonica (Japanese quail), this protein is SPARC-like protein 1 (SPARCL1).